We begin with the raw amino-acid sequence, 647 residues long: Probable squalene--hopene cyclase (647 aa).

Residues 67-108 form a PFTB 1 repeat; it reads EAKIGNYLRRTQGAHGGWPLVHDGPFDMSASVKSYFALKMIG. Asp-388 acts as the Proton donor in catalysis. 2 PFTB repeats span residues 413–454 and 530–577; these read IARG…GALL and IRKA…ALLG.

This sequence belongs to the terpene cyclase/mutase family.

It catalyses the reaction squalene = hop-22(29)-ene. The enzyme catalyses squalene + H2O = hopan-22-ol. The protein operates within secondary metabolite biosynthesis; hopanoid biosynthesis. In terms of biological role, catalyzes the cyclization of squalene into hopene. Probably part of an operon y4aABCD involved in the synthesis of an isoprenoid compound. This Sinorhizobium fredii (strain NBRC 101917 / NGR234) protein is Probable squalene--hopene cyclase (shc).